The primary structure comprises 99 residues: Cell division protein FtsB (99 aa).

At 1 to 3 (MKF) the chain is on the cytoplasmic side. Residues 4 to 21 (FVIALIVLLGLLQYRLWS) traverse the membrane as a helical segment. Topologically, residues 22-99 (GSNSLPEYFV…GERSVSSPSQ (78 aa)) are periplasmic. A coiled-coil region spans residues 36 to 73 (IAVQQEGNDKLNERNQVLKEEIIDLKSGTEAIEERARN).

This sequence belongs to the FtsB family. In terms of assembly, part of a complex composed of FtsB, FtsL and FtsQ.

It is found in the cell inner membrane. Essential cell division protein. May link together the upstream cell division proteins, which are predominantly cytoplasmic, with the downstream cell division proteins, which are predominantly periplasmic. The protein is Cell division protein FtsB of Shewanella sp. (strain W3-18-1).